A 693-amino-acid polypeptide reads, in one-letter code: Alpha-glucosidase (693 aa).

Residues D320 and E323 contribute to the active site. D416 (proton donor) is an active-site residue.

Belongs to the glycosyl hydrolase 31 family.

It is found in the cytoplasm. It catalyses the reaction Hydrolysis of terminal, non-reducing (1-&gt;4)-linked alpha-D-glucose residues with release of alpha-D-glucose.. In terms of biological role, major soluble alpha-glucosidase. In Saccharolobus solfataricus (strain ATCC 35092 / DSM 1617 / JCM 11322 / P2) (Sulfolobus solfataricus), this protein is Alpha-glucosidase (malA).